The chain runs to 317 residues: Heme A synthase (317 aa).

Residues 1–6 are Cytoplasmic-facing; sequence MQRSLK. Residues 7–27 form a helical membrane-spanning segment; that stretch reads WFASATTLAMLFVLIGGALVT. The Extracellular segment spans residues 28 to 62; sequence KTGSGMGCGRSWPLCNGQWVPDHITPELIIELSHR. A disulfide bridge connects residues Cys35 and Cys42. Glu58 is an active-site residue. His61 lines the heme o pocket. The helical transmembrane segment at 63-83 threads the bilayer; it reads LVSGLAGIMVLILSIWAWRAI. At 84–90 the chain is on the cytoplasmic side; sequence GHVQETK. The helical transmembrane segment at 91–111 threads the bilayer; that stretch reads FLAVISFVFLVLQGLIGAAAV. Over 112-121 the chain is Extracellular; the sequence is VWGQSDFVLA. Residues 122–142 form a helical membrane-spanning segment; sequence LHFGISLISFAAVLLLTLLIF. A heme o-binding site is contributed by His123. Over 143–159 the chain is Cytoplasmic; sequence EIDKTFSAASLSLDGKM. The chain crosses the membrane as a helical span at residues 160-180; sequence RFHIYGITIYSYIVVYTGALV. Topologically, residues 181 to 211 are extracellular; it reads RHTNASLACPSWPLCAKTRLLPVQFHEWVQM. The cysteines at positions 189 and 195 are disulfide-linked. The chain crosses the membrane as a helical span at residues 212 to 232; it reads GHRLAAAVIIIWIAAAAIHAV. Position 213 (His213) interacts with heme b. Residues 233–243 lie on the Cytoplasmic side of the membrane; sequence RHYRRQPVIYY. A helical membrane pass occupies residues 244 to 264; it reads GWLIALLLVLAQMTTGALVVF. Over 265–270 the chain is Extracellular; it reads TQLNLY. Residues 271–291 traverse the membrane as a helical segment; the sequence is IALAHAFFISCLFGVLSYLLL. His275 provides a ligand contact to heme b. Residues 292–317 lie on the Cytoplasmic side of the membrane; sequence LALRTRRAPVKAADHSAGEAAPATLK.

It belongs to the COX15/CtaA family. Type 1 subfamily. Interacts with CtaB. Requires heme b as cofactor.

Its subcellular location is the cell membrane. The enzyme catalyses Fe(II)-heme o + 2 A + H2O = Fe(II)-heme a + 2 AH2. It participates in porphyrin-containing compound metabolism; heme A biosynthesis; heme A from heme O: step 1/1. Catalyzes the conversion of heme O to heme A by two successive hydroxylations of the methyl group at C8. The first hydroxylation forms heme I, the second hydroxylation results in an unstable dihydroxymethyl group, which spontaneously dehydrates, resulting in the formyl group of heme A. This chain is Heme A synthase, found in Geobacillus kaustophilus (strain HTA426).